A 116-amino-acid polypeptide reads, in one-letter code: uncharacterized protein (116 aa).

3 helical membrane passes run 8 to 28 (FMIY…VSFA), 39 to 59 (GLLL…NPPF), and 75 to 95 (FLLI…YLMV).

It to M.jannaschii MJ1580.

It localises to the cell membrane. This is an uncharacterized protein from Methanothermobacter thermautotrophicus (strain ATCC 29096 / DSM 1053 / JCM 10044 / NBRC 100330 / Delta H) (Methanobacterium thermoautotrophicum).